Here is a 589-residue protein sequence, read N- to C-terminus: LRR receptor-like serine/threonine-protein kinase FEI 2 (589 aa).

Residues 1–28 (MGICLMKRCCSWFLLISFLSALTNENEA) form the signal peptide. At 29–236 (ISPDGEALLS…TGQGGNNPKR (208 aa)) the chain is on the extracellular side. LRR repeat units lie at residues 72–96 (TKRVIALSLTYHKLRGPLPPELGKL), 97–120 (DQLRLLMLHNNALYQSIPASLGNC), 122–144 (ALEGIYLQNNYITGTIPSEIGNL), 145–168 (SGLKNLDLSNNNLNGAIPASLGQL), and 170–193 (RLTKFNVSNNFLVGKIPSDGLLAR). N-linked (GlcNAc...) asparagine glycosylation is found at N119 and N143. N-linked (GlcNAc...) asparagine glycosylation is found at N175, N215, and N219. Residues 237-257 (LLISASATVGGLLLVALMCFW) traverse the membrane as a helical segment. Residues 258-589 (GCFLYKKLGR…PSDFYDSSSD (332 aa)) lie on the Cytoplasmic side of the membrane. In terms of domain architecture, Protein kinase spans 304–576 (LNEEHIIGCG…VVQLLESEVM (273 aa)). ATP contacts are provided by residues 310–318 (IGCGGFGTV) and K332. A Phosphoserine modification is found at S384. D427 serves as the catalytic Proton acceptor. T460, T461, and T466 each carry phosphothreonine. Y474 is subject to Phosphotyrosine.

Belongs to the protein kinase superfamily. Ser/Thr protein kinase family. Interacts with the ACC synthases ACS5 and ACS9 but not ACS2, via the kinase domain. In terms of processing, autophosphorylated. In terms of tissue distribution, expressed in the root meristem and elongation zone, and in hypocotyls of etiolated seedlings.

The protein resides in the cell membrane. It carries out the reaction L-seryl-[protein] + ATP = O-phospho-L-seryl-[protein] + ADP + H(+). It catalyses the reaction L-threonyl-[protein] + ATP = O-phospho-L-threonyl-[protein] + ADP + H(+). In terms of biological role, involved in the signaling pathway that regulates cell wall function, including cellulose biosynthesis, likely via an 1-aminocyclopropane-1-carboxylic acid (ACC)-mediated signal (a precursor of ethylene). This chain is LRR receptor-like serine/threonine-protein kinase FEI 2 (FEI2), found in Arabidopsis thaliana (Mouse-ear cress).